A 362-amino-acid chain; its full sequence is Photosystem II protein D1 3 (362 aa).

A run of 3 helical transmembrane segments spans residues 29 to 46, 118 to 133, and 142 to 156; these read YVGW…SATI, HFLI…EWEL, and WICI…AATA. Histidine 118 lines the chlorophyll a pocket. A pheophytin a-binding site is contributed by tyrosine 126. [CaMn4O5] cluster-binding residues include aspartate 170 and glutamate 189. A helical membrane pass occupies residues 197 to 218; the sequence is FHMLGVAGVFGGALISAMHGSL. Histidine 198 is a binding site for chlorophyll a. Residues histidine 215 and 264 to 265 each bind a quinone; that span reads AF. Fe cation is bound at residue histidine 215. Position 274 (histidine 274) interacts with Fe cation. Residues 276–290 traverse the membrane as a helical segment; it reads IMAAFPVIGIWFTSL. The [CaMn4O5] cluster site is built by histidine 334, glutamate 335, aspartate 344, and alanine 346. A propeptide spanning residues 347–362 is cleaved from the precursor; it reads GTESAPVAVSTAKVGG.

This sequence belongs to the reaction center PufL/M/PsbA/D family. In terms of assembly, PSII is composed of 1 copy each of membrane proteins PsbA, PsbB, PsbC, PsbD, PsbE, PsbF, PsbH, PsbI, PsbJ, PsbK, PsbL, PsbM, PsbT, PsbX, Psb30/Ycf12, peripheral proteins PsbO, CyanoQ (PsbQ), PsbU, PsbV and a large number of cofactors. It forms dimeric complexes. The cofactor is The D1/D2 heterodimer binds P680, chlorophylls that are the primary electron donor of PSII, and subsequent electron acceptors. It shares a non-heme iron and each subunit binds pheophytin, quinone, additional chlorophylls, carotenoids and lipids. D1 provides most of the ligands for the Mn4-Ca-O5 cluster of the oxygen-evolving complex (OEC). There is also a Cl(-1) ion associated with D1 and D2, which is required for oxygen evolution. The PSII complex binds additional chlorophylls, carotenoids and specific lipids.. Tyr-161 forms a radical intermediate that is referred to as redox-active TyrZ, YZ or Y-Z. In terms of processing, C-terminally processed by CtpA; processing is essential to allow assembly of the oxygen-evolving complex and thus photosynthetic growth.

Its subcellular location is the cell inner membrane. It catalyses the reaction 2 a plastoquinone + 4 hnu + 2 H2O = 2 a plastoquinol + O2. Its function is as follows. Photosystem II (PSII) is a light-driven water:plastoquinone oxidoreductase that uses light energy to abstract electrons from H(2)O, generating O(2) and a proton gradient subsequently used for ATP formation. It consists of a core antenna complex that captures photons, and an electron transfer chain that converts photonic excitation into a charge separation. The D1/D2 (PsbA/PsbD) reaction center heterodimer binds P680, the primary electron donor of PSII as well as several subsequent electron acceptors. This Gloeobacter violaceus (strain ATCC 29082 / PCC 7421) protein is Photosystem II protein D1 3.